The primary structure comprises 412 residues: Protein ALF (412 aa).

2 disordered regions span residues 1 to 47 and 154 to 234; these read MDPE…PLPP and GLSE…GISE. Residues 31 to 47 show a composition bias toward pro residues; it reads PPQPPPPPLPPPQPLPP. The span at 187–196 shows a compositional bias: basic residues; the sequence is MRQRRRKKVV. Residues 206 to 221 show a composition bias toward acidic residues; that stretch reads MEEDEDTEEGQEDNED. DNA-binding regions lie at residues 237–241, 306–313, and 377–380; these read REHPF, NKPKMRHY, and YVPT.

This sequence belongs to the FLO/LFY family. In terms of tissue distribution, expressed in the floral meristem and also in the vegetative meristem.

It is found in the nucleus. Its function is as follows. Probable transcription factor required for the specification of floral meristem identity. The polypeptide is Protein ALF (ALF) (Petunia hybrida (Petunia)).